The primary structure comprises 205 residues: GTP cyclohydrolase-2 (205 aa).

49–53 (RIHSE) lines the GTP pocket. Zn(2+) is bound by residues C54, C65, and C67. GTP-binding positions include Q70, 92-94 (EGR), and T114. Residue D126 is the Proton acceptor of the active site. R128 (nucleophile) is an active-site residue. GTP-binding residues include T149 and K154.

It belongs to the GTP cyclohydrolase II family. It depends on Zn(2+) as a cofactor.

It catalyses the reaction GTP + 4 H2O = 2,5-diamino-6-hydroxy-4-(5-phosphoribosylamino)-pyrimidine + formate + 2 phosphate + 3 H(+). It functions in the pathway cofactor biosynthesis; riboflavin biosynthesis; 5-amino-6-(D-ribitylamino)uracil from GTP: step 1/4. In terms of biological role, catalyzes the conversion of GTP to 2,5-diamino-6-ribosylamino-4(3H)-pyrimidinone 5'-phosphate (DARP), formate and pyrophosphate. The protein is GTP cyclohydrolase-2 of Shewanella denitrificans (strain OS217 / ATCC BAA-1090 / DSM 15013).